A 128-amino-acid chain; its full sequence is Early 3 14.7 kDa protein (128 aa).

This sequence belongs to the adenoviridae E3_15 family. In terms of assembly, may bind to host IKBKG, OPTN and RRAGA.

It localises to the host cytoplasm. It is found in the host nucleus. Functionally, may prevent Nf-kappaB activation by immune signals like Tumor necrosis factor, presumably by inhibiting NFKB1 dimer DNA-binding. May act directly at the TNF receptor to inhibit signaling. This is Early 3 14.7 kDa protein from Human adenovirus C serotype 2 (HAdV-2).